We begin with the raw amino-acid sequence, 691 residues long: Serotransferrin-2 (691 aa).

Residues 1–18 form the signal peptide; the sequence is MKLLLLSALLGCLATAYA. Transferrin-like domains are found at residues 25–329 and 340–670; these read VKWC…SLKK and IKWC…SLRK. Cysteines 28 and 50 form a disulfide. 2 residues coordinate Fe(3+): D74 and Y104. 3 disulfide bridges follow: C127-C207, C172-C186, and C235-C249. Residues T129, S134, G136, and W137 each coordinate hydrogencarbonate. An N-linked (GlcNAc...) asparagine glycan is attached at N169. Residue Y201 coordinates Fe(3+). Fe(3+) is bound at residue H257. 2 cysteine pairs are disulfide-bonded: C343-C379 and C353-C370. Residues D394 and Y428 each contribute to the Fe(3+) site. 7 cysteine pairs are disulfide-bonded: C404–C682, C419–C643, C451–C530, C475–C671, C485–C499, C496–C513, and C570–C584. Residues T453, R457, A459, and G460 each contribute to the hydrogencarbonate site. Y524 is a Fe(3+) binding site. H592 lines the Fe(3+) pocket.

The protein belongs to the transferrin family. As to quaternary structure, monomer. Abundant in liver and serum with smaller amounts found in the stomach and kidney.

It is found in the secreted. Functionally, transferrins are iron binding transport proteins which can bind two Fe(3+) ions in association with the binding of an anion, usually bicarbonate. It is responsible for the transport of iron from sites of absorption and heme degradation to those of storage and utilization. Serum transferrin may also have a further role in stimulating cell proliferation. This chain is Serotransferrin-2 (tf2), found in Salmo salar (Atlantic salmon).